A 407-amino-acid polypeptide reads, in one-letter code: UPF0597 protein NAMH_0191 (407 aa).

This sequence belongs to the UPF0597 family.

This Nautilia profundicola (strain ATCC BAA-1463 / DSM 18972 / AmH) protein is UPF0597 protein NAMH_0191.